Reading from the N-terminus, the 462-residue chain is MVITIALIGRTNVGKSTLFNKLTGNRNDALASNHASLTRDRKHGFIIVNNTKIVLIDTPGINEDSKKKISLDKEIFEQVKFSIKQADLVCLVVSARNKLMHKDVEIIEMLRKFQKKIFLLVNKIEGLNFDLVKYEFYTLGLRNMHFISATNGIGIDFLTNNICSFFTSQKNSLYKKNKDFDIIYSITNDKKNCCQNLNKTIKIAIIGKPNVGKSTLINVLLNEKRVIVDSNPGTTRDSNWSLIIRNKINYMFFDTAGIRKKNKISTYIEKISVHKTLKILNLVHVVLLVIDAMDGFSDQDFYLLNLIIKNGCSVIIILNKNDKLSEKMRINVLNSKMLKLISHVKCHFISAKHNMGTSIIFKLINEAFFNSIKKIHTSKITEILKLAITKHQPPIYKRDRIKIKYAHIGKHNPLTIIIHGNKLEKLSNVYKKYLTNFFQSKLNLVGSSIVLYFKSSKNPFIK.

2 EngA-type G domains span residues 3-170 and 201-372; these read ITIA…TSQK and IKIA…FNSI. Residues 9–16, 57–61, 122–125, 207–214, 254–258, and 319–322 each bind GTP; these read GRTNVGKS, DTPGI, NKIE, GKPNVGKS, DTAGI, and NKND. Residues 373–457 form the KH-like domain; it reads KKIHTSKITE…SIVLYFKSSK (85 aa).

This sequence belongs to the TRAFAC class TrmE-Era-EngA-EngB-Septin-like GTPase superfamily. EngA (Der) GTPase family. In terms of assembly, associates with the 50S ribosomal subunit.

In terms of biological role, GTPase that plays an essential role in the late steps of ribosome biogenesis. This chain is GTPase Der, found in Buchnera aphidicola subsp. Baizongia pistaciae (strain Bp).